We begin with the raw amino-acid sequence, 101 residues long: Small ribosomal subunit protein uS14 (101 aa).

It belongs to the universal ribosomal protein uS14 family. In terms of assembly, part of the 30S ribosomal subunit. Contacts proteins S3 and S10.

Its function is as follows. Binds 16S rRNA, required for the assembly of 30S particles and may also be responsible for determining the conformation of the 16S rRNA at the A site. This Colwellia psychrerythraea (strain 34H / ATCC BAA-681) (Vibrio psychroerythus) protein is Small ribosomal subunit protein uS14.